We begin with the raw amino-acid sequence, 360 residues long: S-adenosylmethionine:tRNA ribosyltransferase-isomerase (360 aa).

It belongs to the QueA family. As to quaternary structure, monomer.

It is found in the cytoplasm. It catalyses the reaction 7-aminomethyl-7-carbaguanosine(34) in tRNA + S-adenosyl-L-methionine = epoxyqueuosine(34) in tRNA + adenine + L-methionine + 2 H(+). The protein operates within tRNA modification; tRNA-queuosine biosynthesis. Its function is as follows. Transfers and isomerizes the ribose moiety from AdoMet to the 7-aminomethyl group of 7-deazaguanine (preQ1-tRNA) to give epoxyqueuosine (oQ-tRNA). The polypeptide is S-adenosylmethionine:tRNA ribosyltransferase-isomerase (Rhodopseudomonas palustris (strain TIE-1)).